The chain runs to 305 residues: tRNA dimethylallyltransferase (305 aa).

Residue 15–22 (GPTASGKS) participates in ATP binding. Residue 17-22 (TASGKS) participates in substrate binding. 2 interaction with substrate tRNA regions span residues 40–43 (DSMQ) and 164–168 (QRIVR).

This sequence belongs to the IPP transferase family. In terms of assembly, monomer. It depends on Mg(2+) as a cofactor.

The catalysed reaction is adenosine(37) in tRNA + dimethylallyl diphosphate = N(6)-dimethylallyladenosine(37) in tRNA + diphosphate. Functionally, catalyzes the transfer of a dimethylallyl group onto the adenine at position 37 in tRNAs that read codons beginning with uridine, leading to the formation of N6-(dimethylallyl)adenosine (i(6)A). This Sinorhizobium medicae (strain WSM419) (Ensifer medicae) protein is tRNA dimethylallyltransferase.